Reading from the N-terminus, the 258-residue chain is 14-3-3 protein 6 (258 aa).

Residues 238–258 (DMQDDGTDEIKEATPKPDDNE) are disordered. A compositionally biased stretch (basic and acidic residues) spans 245–258 (DEIKEATPKPDDNE).

The protein belongs to the 14-3-3 family. As to quaternary structure, homodimer.

The sequence is that of 14-3-3 protein 6 (TFT6) from Solanum lycopersicum (Tomato).